Here is a 247-residue protein sequence, read N- to C-terminus: Flavin-dependent thymidylate synthase (247 aa).

Residues M1–E237 enclose the ThyX domain. DUMP is bound by residues Q85–R88, S98–R100, and R176. R88–R90 is an FAD binding site. The ThyX motif motif lies at R88–S98. FAD is bound by residues N192 to R194 and H198. R203 serves as a coordination point for dUMP. R203 (involved in ionization of N3 of dUMP, leading to its activation) is an active-site residue.

The protein belongs to the thymidylate synthase ThyX family. As to quaternary structure, homotetramer. FAD serves as cofactor.

The enzyme catalyses dUMP + (6R)-5,10-methylene-5,6,7,8-tetrahydrofolate + NADPH + H(+) = dTMP + (6S)-5,6,7,8-tetrahydrofolate + NADP(+). The protein operates within pyrimidine metabolism; dTTP biosynthesis. Its function is as follows. Catalyzes the reductive methylation of 2'-deoxyuridine-5'-monophosphate (dUMP) to 2'-deoxythymidine-5'-monophosphate (dTMP) while utilizing 5,10-methylenetetrahydrofolate (mTHF) as the methyl donor, and NADPH and FADH(2) as the reductant. The chain is Flavin-dependent thymidylate synthase from Haloarcula marismortui (strain ATCC 43049 / DSM 3752 / JCM 8966 / VKM B-1809) (Halobacterium marismortui).